Reading from the N-terminus, the 817-residue chain is MNRRNRSNDLNPEPSIENPNNQIAEEFPGNNSVYKSDGYVDLKNNGRLFPIWILKNFKQYKLPEIIRKENEDPCNVQVKLELRKYQEFVGQYLNPQGPYTSILLYHGLGSGKTASAINLMNILYNYDNGTNFIVLIKASLHNDPWMQDLKEWLGRDPSEQNVDNVTKLDRYKNIHFVHYDSPFADSSFMSVIKTLDLSKPTMYIIDEAHNFIRNVYSNINSKLGKRAKVIYEYIMKDKRENKNTRIVLISATPAINTPFELALMFNLLRPGIFPSSELDFNRTFVTESSYPILNPMKKNMFERRILGLVSYYIGATPDLYARQELKYINLPMSAYQYDIYRIFEKLEAEIQERARRRGKQSQLYRTYTRQACNFVFPYVNMNVNGELRPRPGKFRLSEKLADDFSKGKNLDVPDTEKEILNKYTKAIENYLNETERYFQNINKKDAENGRTIINDLDEFKKGFGTKFNSFLQYYQSEGPRSSLLTEMYNCSPKMLAIAFMTYISPGKVMIYSNYVVMEGIDVMKIYFRLIGFNDFTIAREYMGYCEYHGRIDPKDRVRIKNMFNDKNNVYGNKCKVIMLSPSATEGIQLLDIRQEHIMEPYWTEVRIQQVIGRGVRQCSHRDLPMSERIVDIYRYKVIKPENLDPDDTVRQSTDEYVEDQAKSKANLIESFLGAMKEAAVDCELFKEHNMMSQSYYCFKFPESAVTKTNVGPAYREDIKDDVKYDSGLNSKNSIVERIRVVKVNAVYQINTDNNNPVYSSPTKYWYNKKTGMVYDFETHYPVGQVEFIDNLPNKLDKDTYIMRIDVIIPSITGSVNT.

The interval 1 to 29 (MNRRNRSNDLNPEPSIENPNNQIAEEFPG) is disordered. Positions 17–29 (ENPNNQIAEEFPG) are enriched in polar residues. The Helicase ATP-binding domain maps to 93–271 (LNPQGPYTSI…ALMFNLLRPG (179 aa)). 106–113 (HGLGSGKT) serves as a coordination point for ATP. A DEAH box motif is present at residues 206 to 209 (DEAH). The Helicase C-terminal domain maps to 495-661 (LAIAFMTYIS…STDEYVEDQA (167 aa)).

This sequence belongs to the DEAD box helicase family. DEAH subfamily.

It localises to the virion. The catalysed reaction is ATP + H2O = ADP + phosphate + H(+). In Acanthamoeba polyphaga mimivirus (APMV), this protein is Putative ATP-dependent RNA helicase R350.